A 93-amino-acid polypeptide reads, in one-letter code: Class II hydrophobin 1 (93 aa).

A signal peptide spans 1–16 (MKFFAVAALFVASAMA). Disulfide bonds link Cys24/Cys74, Cys35/Cys65, Cys36/Cys48, and Cys75/Cys86.

It belongs to the cerato-ulmin hydrophobin family. Interacts with maize ubiquilin 1-like (UBL) protein. Homotetramer. Further self-assembles to form highly ordered films at water-air interfaces through intermolecular interactions.

It localises to the cell membrane. Aerial growth, conidiation, and dispersal of filamentous fungi in the environment rely upon a capability of their secreting small amphipathic proteins called hydrophobins (HPBs) with low sequence identity. Class I can self-assemble into an outermost layer of rodlet bundles on aerial cell surfaces, conferring cellular hydrophobicity that supports fungal growth, development and dispersal; whereas Class II form highly ordered films at water-air interfaces through intermolecular interactions but contribute nothing to the rodlet structure. Hyd1 is a class II hydrophobin that acts as an elicitor of induced systemic resistance (ISR) in plants. During interaction with the plant, binds with the maize target protein UBL in order to recruit more UBL proteins in maize roots to elicit plant defense responses, including cell death as well as brassinosteroid, jasmonate (JA) and ethylene (ET) signaling. The polypeptide is Class II hydrophobin 1 (Trichoderma harzianum (Hypocrea lixii)).